A 4516-amino-acid polypeptide reads, in one-letter code: Dynein axonemal heavy chain 1 (4516 aa).

The stem stretch occupies residues 1 to 1748; it reads MVTLSISDTL…YIRAVNAEFI (1748 aa). Residues 78-160 are disordered; it reads SSGSDKSLKN…RKSPLAGTDK (83 aa). Basic and acidic residues-rich tracts occupy residues 83-97 and 113-129; these read KSLK…KEEA and ENHD…RNPE. AAA stretches follow at residues 1749–1956, 2016–2249, 2422–2682, and 2780–2972; these read YGYE…VISA, QAIR…TTVK, TMMP…VFQG, and DYNQ…CCTI. Positions 1787-1794 match the GPAGTGKT motif motif; it reads GPAGTGKT. 1787–1794 contacts ATP; it reads GPAGTGKT. The short motif at 1837-1843 is the CFDEFNR motif element; it reads CFDEFNR. ATP is bound by residues 2054-2061, 2460-2467, and 2819-2826; these read GPTGSGKS, GPTGTGKT, and GVGGSGRS. A stalk region spans residues 2987-3285; sequence ATRFLHEIPE…MHKYHFVAKA (299 aa). Positions 3293–3394 form a coiled coil; sequence LREAQDDLEV…QDTVENLENM (102 aa). 2 AAA regions span residues 3388-3618 and 3831-4050; these read VENL…EERP and LPAF…SYNS.

The protein belongs to the dynein heavy chain family. Consists of at least two heavy chains and a number of intermediate and light chains. Expressed in brain.

It localises to the cytoplasm. It is found in the cytoskeleton. Its subcellular location is the cilium axoneme. The protein resides in the cell projection. The protein localises to the cilium. It localises to the flagellum. Force generating protein of cilia required for sperm flagellum motility. Produces force towards the minus ends of microtubules. Dynein has ATPase activity; the force-producing power stroke is thought to occur on release of ADP. Required in spermatozoa for the formation of the inner dynein arms and biogenesis of the axoneme. The protein is Dynein axonemal heavy chain 1 of Rattus norvegicus (Rat).